The primary structure comprises 300 residues: Putative S-adenosyl-L-methionine-dependent methyltransferase MUL_0817 (300 aa).

S-adenosyl-L-methionine contacts are provided by residues Asp-127 and 156-157 (DL).

It belongs to the UPF0677 family.

Its function is as follows. Exhibits S-adenosyl-L-methionine-dependent methyltransferase activity. This Mycobacterium ulcerans (strain Agy99) protein is Putative S-adenosyl-L-methionine-dependent methyltransferase MUL_0817.